A 300-amino-acid polypeptide reads, in one-letter code: 33 kDa chaperonin (300 aa).

2 disulfides stabilise this stretch: Cys-235–Cys-237 and Cys-269–Cys-272.

The protein belongs to the HSP33 family. Under oxidizing conditions two disulfide bonds are formed involving the reactive cysteines. Under reducing conditions zinc is bound to the reactive cysteines and the protein is inactive.

The protein resides in the cytoplasm. Its function is as follows. Redox regulated molecular chaperone. Protects both thermally unfolding and oxidatively damaged proteins from irreversible aggregation. Plays an important role in the bacterial defense system toward oxidative stress. This chain is 33 kDa chaperonin, found in Pseudomonas fluorescens (strain ATCC BAA-477 / NRRL B-23932 / Pf-5).